The following is a 636-amino-acid chain: PTS system beta-glucoside-specific EIIBCA component (636 aa).

The 86-residue stretch at 1–86 folds into the PTS EIIB type-1 domain; that stretch reads MKYEQLAKDI…VEIGGFQNQA (86 aa). Cysteine 26 functions as the Phosphocysteine intermediate; for EIIB activity in the catalytic mechanism. Transmembrane regions (helical) follow at residues 104-124, 146-166, 172-192, 215-235, 258-278, 299-319, 337-357, 369-389, 407-427, and 444-464; these read IDII…TGMI, LLHA…GYTA, ATPF…LVVL, FLGI…IILA, LVPF…IGPI, IIAG…GLHW, VLAM…AVWL, VPAF…GVTL, AIIG…IFGI, and IVIA…LFGL. Residues 105 to 476 enclose the PTS EIIC type-1 domain; it reads DIIASIFTPV…GNASDEQTET (372 aa). Residues 472 to 492 are disordered; sequence EQTETKAHTSTGTGEKEEISS. One can recognise a PTS EIIA type-1 domain in the interval 506-610; that stretch reads DEAFSSGALG…AVTTPVIVTN (105 aa). The Tele-phosphohistidine intermediate; for EIIA activity role is filled by histidine 558.

It is found in the cell membrane. Functionally, the phosphoenolpyruvate-dependent sugar phosphotransferase system (sugar PTS), a major carbohydrate active -transport system, catalyzes the phosphorylation of incoming sugar substrates concomitantly with their translocation across the cell membrane. This system is involved in beta-glucoside transport. This chain is PTS system beta-glucoside-specific EIIBCA component (bglP), found in Halalkalibacterium halodurans (strain ATCC BAA-125 / DSM 18197 / FERM 7344 / JCM 9153 / C-125) (Bacillus halodurans).